The chain runs to 223 residues: ATP phosphoribosyltransferase (223 aa).

This sequence belongs to the ATP phosphoribosyltransferase family. Short subfamily. In terms of assembly, heteromultimer composed of HisG and HisZ subunits.

It localises to the cytoplasm. The enzyme catalyses 1-(5-phospho-beta-D-ribosyl)-ATP + diphosphate = 5-phospho-alpha-D-ribose 1-diphosphate + ATP. It participates in amino-acid biosynthesis; L-histidine biosynthesis; L-histidine from 5-phospho-alpha-D-ribose 1-diphosphate: step 1/9. Its function is as follows. Catalyzes the condensation of ATP and 5-phosphoribose 1-diphosphate to form N'-(5'-phosphoribosyl)-ATP (PR-ATP). Has a crucial role in the pathway because the rate of histidine biosynthesis seems to be controlled primarily by regulation of HisG enzymatic activity. The polypeptide is ATP phosphoribosyltransferase (Halothermothrix orenii (strain H 168 / OCM 544 / DSM 9562)).